Reading from the N-terminus, the 553-residue chain is Arginine--tRNA ligase (553 aa).

Residues 130-140 (ANPTGDLHIGH) carry the 'HIGH' region motif.

The protein belongs to the class-I aminoacyl-tRNA synthetase family. As to quaternary structure, monomer.

Its subcellular location is the cytoplasm. The catalysed reaction is tRNA(Arg) + L-arginine + ATP = L-arginyl-tRNA(Arg) + AMP + diphosphate. In Staphylococcus aureus (strain USA300 / TCH1516), this protein is Arginine--tRNA ligase.